The sequence spans 338 residues: MNAKIIASLAFTSMFSLSTLLSPAHAEEQEKALNFGIISTESQQNLKPQWTPFLQDMEKKLGVKVNAFFAPDYAGIIQGMRFNKVDIAWYGNLSAMEAVDRANGQVFAQTVAADGSPGYWSVLIVNKDSPINNLNDLLAKRKDLTFGNGDPNSTSGFLVPGYYVFAKNNISASDFKRTVNAGHETNALAVANKQVDVATNNTENLDKLKTSAPEKLKELKVIWKSPLIPGDPIVWRKNLSETTKDKIYDFFMNYGKTPEEKAVLERLGWAPFRASSDLQLVPIRQLALFKEMQGVKSNKGLNEQDKLAKTTEIQAQLDDLDRLNNALSAMSSVSKAVQ.

The N-terminal stretch at 1 to 26 is a signal peptide; it reads MNAKIIASLAFTSMFSLSTLLSPAHA.

The protein belongs to the phosphate/phosphite/phosphonate binding protein family. The complex is composed of two ATP-binding proteins (PhnC), two transmembrane proteins (PhnE) and a solute-binding protein (PhnD).

It is found in the periplasm. Functionally, phosphonate binding protein that is part of the phosphonate uptake system. Exhibits high affinity for 2-aminoethylphosphonate, and somewhat less affinity to ethylphosphonate, methylphosphonate, phosphonoacetate and phenylphosphonate. The sequence is that of Phosphonates-binding periplasmic protein (phnD) from Escherichia coli (strain K12).